The following is a 570-amino-acid chain: Sulfite reductase [NADPH] hemoprotein beta-component (570 aa).

Cys434, Cys440, Cys479, and Cys483 together coordinate [4Fe-4S] cluster. Position 483 (Cys483) interacts with siroheme.

The protein belongs to the nitrite and sulfite reductase 4Fe-4S domain family. In terms of assembly, alpha(8)-beta(8). The alpha component is a flavoprotein, the beta component is a hemoprotein. Requires siroheme as cofactor. It depends on [4Fe-4S] cluster as a cofactor.

The enzyme catalyses hydrogen sulfide + 3 NADP(+) + 3 H2O = sulfite + 3 NADPH + 4 H(+). It functions in the pathway sulfur metabolism; hydrogen sulfide biosynthesis; hydrogen sulfide from sulfite (NADPH route): step 1/1. Component of the sulfite reductase complex that catalyzes the 6-electron reduction of sulfite to sulfide. This is one of several activities required for the biosynthesis of L-cysteine from sulfate. This is Sulfite reductase [NADPH] hemoprotein beta-component from Salmonella enteritidis PT4 (strain P125109).